The following is a 144-amino-acid chain: 3-dehydroquinate dehydratase (144 aa).

Residue Y23 is the Proton acceptor of the active site. Residues N74, H80, and D87 each contribute to the substrate site. H100 serves as the catalytic Proton donor. Residues L101–S102 and R111 contribute to the substrate site.

It belongs to the type-II 3-dehydroquinase family. As to quaternary structure, homododecamer.

The catalysed reaction is 3-dehydroquinate = 3-dehydroshikimate + H2O. It functions in the pathway metabolic intermediate biosynthesis; chorismate biosynthesis; chorismate from D-erythrose 4-phosphate and phosphoenolpyruvate: step 3/7. Its function is as follows. Catalyzes a trans-dehydration via an enolate intermediate. This is 3-dehydroquinate dehydratase from Hydrogenovibrio crunogenus (strain DSM 25203 / XCL-2) (Thiomicrospira crunogena).